The chain runs to 291 residues: 4-diphosphocytidyl-2-C-methyl-D-erythritol kinase (291 aa).

Lysine 12 is a catalytic residue. 95–105 contacts ATP; that stretch reads PDGGGLGGGSS. Aspartate 137 is a catalytic residue.

It belongs to the GHMP kinase family. IspE subfamily.

The enzyme catalyses 4-CDP-2-C-methyl-D-erythritol + ATP = 4-CDP-2-C-methyl-D-erythritol 2-phosphate + ADP + H(+). It functions in the pathway isoprenoid biosynthesis; isopentenyl diphosphate biosynthesis via DXP pathway; isopentenyl diphosphate from 1-deoxy-D-xylulose 5-phosphate: step 3/6. In terms of biological role, catalyzes the phosphorylation of the position 2 hydroxy group of 4-diphosphocytidyl-2C-methyl-D-erythritol. In Alkalilimnicola ehrlichii (strain ATCC BAA-1101 / DSM 17681 / MLHE-1), this protein is 4-diphosphocytidyl-2-C-methyl-D-erythritol kinase.